The primary structure comprises 193 residues: Sarcoplasmic calcium-binding protein (193 aa).

3 EF-hand domains span residues 16–40 (MYDI…NTLI), 57–92 (IMSN…LCCG), and 101–136 (CFKT…RSAF). Positions 18, 20, 22, 24, 29, 70, 72, 74, 76, 81, 114, 116, 118, and 125 each coordinate Ca(2+).

In terms of assembly, monomer and dimer. In terms of tissue distribution, skeletal muscle (at protein level).

Functionally, like parvalbumins, SCPs seem to be more abundant in fast contracting muscles, but no functional relationship can be established from this distribution. This is Sarcoplasmic calcium-binding protein from Scylla paramamosain (Mud crab).